Here is an 85-residue protein sequence, read N- to C-terminus: Putative sodium channel toxin Ts34 (85 aa).

An N-terminal signal peptide occupies residues 1-17 (MNLPLLLLITILIEIHA). Residues 19-82 (KDGYVIYKNS…IYGETGSYCW (64 aa)) form the LCN-type CS-alpha/beta domain. 4 disulfide bridges follow: cysteine 30–cysteine 81, cysteine 34–cysteine 57, cysteine 43–cysteine 62, and cysteine 47–cysteine 64.

The protein belongs to the long (4 C-C) scorpion toxin superfamily. Sodium channel inhibitor family. Expressed by the venom gland.

It localises to the secreted. Putative sodium channel toxin. The protein is Putative sodium channel toxin Ts34 of Tityus serrulatus (Brazilian scorpion).